The following is a 304-amino-acid chain: Bacteriochlorophyll synthase 33 kDa chain (304 aa).

9 consecutive transmembrane segments (helical) span residues 26–46 (VTWFPPMWAYLCGAVSSNVPI), 51–71 (GVVVLGIVLAGPIVCGMSQAA), 94–114 (IPGLWGLYIAIAMSLLSLVVG), 117–137 (LGSWGFVATLLGVAAAWAYSV), 151–171 (GLVGLAYEGLPWITGAAVLLA), 178–198 (GFPIVMMATLYALGAHGIMTI), 227–247 (IACTVMGLAQALVITMLYLFS), 250–270 (YHATAVLVLLCGQFWAMSVWM), and 279–299 (WYNGTGVVMYVSGMMITAFAI).

It is found in the cell membrane. Its pathway is porphyrin-containing compound metabolism; bacteriochlorophyll biosynthesis (light-independent). Its function is as follows. Catalyzes the esterification of bacteriochlorophyllide a by geranylgeraniol-PPi. In Rhodobacter capsulatus (strain ATCC BAA-309 / NBRC 16581 / SB1003), this protein is Bacteriochlorophyll synthase 33 kDa chain (bchG).